The following is a 465-amino-acid chain: MNFDSSPIAAIATAPGRGGIGVVRVSGKNISSIIEAVCATKGAELQPRHATFTNFVNADGSVIDQGLAIYFKAPHSYTGEDVLELQGHGGPIVLQMLLTRCLEAGTDIGLRMAQPGEFTHRAFLNDKLDLAQAEGVIDLIEASTEAAAKSASQSLSGAFSKTIQDLVDKITNLRMLVEATLDFPEEEIDFLEKSDARGQLNGIREALQAVFTQASQGALLRDGLNIVLAGQPNVGKSSLLNALAGSDVAIVTAIAGTTRDKVIETIQIEGIPVNVIDTAGIRDASDATDEVERIGIERTWAAVKTADVIIHMLDANRGPTRADEQIVERFPENIPVMRIWNKIDLSGHRPAIDRMPDSTHIYVSATDLQGMDLLRGELLRLIGWQQTGESLYLARERHLVALKSAHDHLEMAAQHAAHDSEATDPALDLFAEELRLAQERLSSITGEFTSDDLLGVIFSRFCIGK.

The (6S)-5-formyl-5,6,7,8-tetrahydrofolate site is built by R24, E84, and K127. Residues 223–383 (GLNIVLAGQP…LRGELLRLIG (161 aa)) form the TrmE-type G domain. N233 contributes to the K(+) binding site. Residues 233 to 238 (NVGKSS), 252 to 258 (TAIAGTT), and 277 to 280 (DTAG) contribute to the GTP site. Mg(2+) is bound at residue S237. Positions 252, 254, and 257 each coordinate K(+). T258 lines the Mg(2+) pocket. Residue K465 coordinates (6S)-5-formyl-5,6,7,8-tetrahydrofolate.

It belongs to the TRAFAC class TrmE-Era-EngA-EngB-Septin-like GTPase superfamily. TrmE GTPase family. As to quaternary structure, homodimer. Heterotetramer of two MnmE and two MnmG subunits. It depends on K(+) as a cofactor.

The protein resides in the cytoplasm. Its function is as follows. Exhibits a very high intrinsic GTPase hydrolysis rate. Involved in the addition of a carboxymethylaminomethyl (cmnm) group at the wobble position (U34) of certain tRNAs, forming tRNA-cmnm(5)s(2)U34. The sequence is that of tRNA modification GTPase MnmE from Janthinobacterium sp. (strain Marseille) (Minibacterium massiliensis).